Here is a 207-residue protein sequence, read N- to C-terminus: Ubiquitin-conjugating enzyme E2 E3 (207 aa).

Over residues 1–10 (MSSDRQRSDD) the composition is skewed to basic and acidic residues. Residues 1–63 (MSSDRQRSDD…KTTAKLSTSA (63 aa)) form a disordered region. Ser-2 carries the post-translational modification N-acetylserine. Phosphoserine is present on Ser-8. The segment covering 50-63 (KLSSKTTAKLSTSA) has biased composition (low complexity). Positions 61–207 (TSAKRIQKEL…ARQWTKRYAT (147 aa)) constitute a UBC core domain. Cys-145 functions as the Glycyl thioester intermediate in the catalytic mechanism.

Belongs to the ubiquitin-conjugating enzyme family. The ubiquitin-loaded form interacts specifically with importin-11 (IPO11), leading to its import into the nucleus. Interacts with NEDD4L.

The protein resides in the nucleus. Its subcellular location is the cytoplasm. It catalyses the reaction S-ubiquitinyl-[E1 ubiquitin-activating enzyme]-L-cysteine + [E2 ubiquitin-conjugating enzyme]-L-cysteine = [E1 ubiquitin-activating enzyme]-L-cysteine + S-ubiquitinyl-[E2 ubiquitin-conjugating enzyme]-L-cysteine.. It functions in the pathway protein modification; protein ubiquitination. Its function is as follows. Accepts ubiquitin from the E1 complex and catalyzes its covalent attachment to other proteins. In vitro catalyzes 'Lys-11'- and 'Lys-48'-, as well as 'Lys-63'-linked polyubiquitination. Participates in the regulation of transepithelial sodium transport in renal cells. This chain is Ubiquitin-conjugating enzyme E2 E3 (UBE2E3), found in Bos taurus (Bovine).